The sequence spans 436 residues: MFKAQATFSRYSAAVSLLLLFSGAAQAAPQSITTLPLQPDGENRWRLPAGEYQGQFTIEQPMQLRCEPGAVIQSQGQGSSLLISAPDVLVEGCTLYEWGSDLTAMDSAVFILPAAERAQISNNRMRGPGFGVFVDGTRDVQVIGNEIDGDAGVRSQDRGNGIHLFAVSGARVLHNHVRNARDGIYIDTSNGNHLEGNVIEDVRYGVHYMFANENSLIDNVTRRTRTGYALMQSRKLTVTGNRSEQDQNYGILMNYITYSTITGNFVSDVQRGDTGGDSMISGGEGKALFIYNSLFNTIENNHFEKSSLGIHLTAGSEDNRISGNAFVGNQQQVKYVASRTQEWSVDGRGNYWSDYLGWDRNNDGLGDIAYEPNDNVDRLLWLYPQVRLLMNSPSIEVLRWVQRAFPVIKSPGVQDSHPLMKLPTEKLLTEKQEPTS.

The first 27 residues, 1–27 (MFKAQATFSRYSAAVSLLLLFSGAAQA), serve as a signal peptide directing secretion. PbH1 repeat units lie at residues 85–113 (APDVLVEGCTLYEWGSDLTAMDSAVFILP), 115–136 (AERAQISNNRMRGPGFGVFVDG), 137–166 (TRDVQVIGNEIDGDAGVRSQDRGNGIHLFA), 167–188 (VSGARVLHNHVRNARDGIYIDT), 189–210 (SNGNHLEGNVIEDVRYGVHYMF), 233–255 (SRKLTVTGNRSEQDQNYGILMNY), 293–314 (SLFNTIENNHFEKSSLGIHLTA), and 316–354 (SEDNRISGNAFVGNQQQVKYVASRTQEWSVDGRGNYWSD).

It belongs to the NosD family. As to quaternary structure, the complex may be composed of an ATP-binding protein (NosF), a transmembrane protein (NosY) and a solute-binding protein (NosD).

Its subcellular location is the periplasm. Its function is as follows. Required for the assembly of the copper chromophores of nitrous oxide reductase. Could be part of the ABC transporter complex NosDFY. This Stutzerimonas stutzeri (Pseudomonas stutzeri) protein is Probable ABC transporter binding protein NosD.